The primary structure comprises 623 residues: Phosphatidylinositol-3-phosphatase SAC1 (623 aa).

Residues 1–523 are Cytoplasmic-facing; it reads MTGPIVYVQN…SPFPDRRPVY (523 aa). One can recognise an SAC domain in the interval 115-454; it reads LELHLKNSTF…ADAVSVAYSG (340 aa). Glycyl lysine isopeptide (Lys-Gly) (interchain with G-Cter in ubiquitin) cross-links involve residues K246 and K358. The helical transmembrane segment at 524–544 threads the bilayer; that stretch reads IQLIPMIICAALTVLGATIFF. Residues 545-552 are Lumenal-facing; it reads PKDRFTSS. The helical transmembrane segment at 553–573 threads the bilayer; it reads KNLLYFAGASIVLALSTKFMF. Over 574–623 the chain is Cytoplasmic; sequence KNGIQFVNWPKLVDVGFLVVHQTHDKEQQFKGLKYAQSPKFSKPDPLKRD.

In terms of assembly, component of the SPOTS complex, at least composed of LCB1/2 (LCB1 and/or LCB2), ORM1/2 (ORM1 and/or ORM2), SAC1 and TSC3.

The protein localises to the endoplasmic reticulum membrane. The protein resides in the golgi apparatus membrane. The catalysed reaction is a 1,2-diacyl-sn-glycero-3-phospho-(1D-myo-inositol-3-phosphate) + H2O = a 1,2-diacyl-sn-glycero-3-phospho-(1D-myo-inositol) + phosphate. The enzyme catalyses a 1,2-diacyl-sn-glycero-3-phospho-(1D-myo-inositol 4-phosphate) + H2O = a 1,2-diacyl-sn-glycero-3-phospho-(1D-myo-inositol) + phosphate. Its function is as follows. Phosphoinositide phosphatase which catalyzes the hydrolysis of phosphatidylinositol 3-phosphate (PtdIns(3)P) and phosphatidylinositol 4-phosphate (PtdIns(4)P). Has low activity towards phosphatidylinositol-3,5-bisphosphate (PtdIns(3,5)P2). May be involved in the coordination of the activities of the secretory pathway and the actin cytoskeleton. The polypeptide is Phosphatidylinositol-3-phosphatase SAC1 (SAC1) (Saccharomyces cerevisiae (strain ATCC 204508 / S288c) (Baker's yeast)).